The sequence spans 68 residues: MNSKAIISVFLIMLVVVSCTQATYETEDDDEPGPRHSEKRSCARGCGGDSDCPCPGWHCPSPGGRCEP.

A signal peptide spans 1–22 (MNSKAIISVFLIMLVVVSCTQA). Positions 23-40 (TYETEDDDEPGPRHSEKR) are excised as a propeptide. The tract at residues 24–50 (YETEDDDEPGPRHSEKRSCARGCGGDS) is disordered. Basic and acidic residues predominate over residues 32–41 (PGPRHSEKRS). 3 disulfide bridges follow: cysteine 42–cysteine 54, cysteine 46–cysteine 59, and cysteine 52–cysteine 66.

Stable protein with probable toxin activity. Does not show activity on all channels tested. Shows no hemolytic activity on rat erythrocytes. The sequence is that of U-actitoxin-Avt1 from Aulactinia veratra (Green snakelock anemone).